The primary structure comprises 255 residues: Hydroxyacylglutathione hydrolase (255 aa).

7 residues coordinate Zn(2+): histidine 56, histidine 58, aspartate 60, histidine 61, histidine 114, aspartate 133, and histidine 171.

The protein belongs to the metallo-beta-lactamase superfamily. Glyoxalase II family. In terms of assembly, monomer. The cofactor is Zn(2+).

The enzyme catalyses an S-(2-hydroxyacyl)glutathione + H2O = a 2-hydroxy carboxylate + glutathione + H(+). The protein operates within secondary metabolite metabolism; methylglyoxal degradation; (R)-lactate from methylglyoxal: step 2/2. Functionally, thiolesterase that catalyzes the hydrolysis of S-D-lactoyl-glutathione to form glutathione and D-lactic acid. This chain is Hydroxyacylglutathione hydrolase, found in Bradyrhizobium diazoefficiens (strain JCM 10833 / BCRC 13528 / IAM 13628 / NBRC 14792 / USDA 110).